The chain runs to 715 residues: Integrator complex subunit 13 (715 aa).

2 disordered regions span residues lysine 572–isoleucine 612 and alanine 626–proline 659. A Nuclear localization signal (NLS) motif is present at residues lysine 581–glutamate 591. The cleavage module binding motif (CMBM) stretch occupies residues glycine 658–glycine 703.

The protein belongs to the Integrator subunit 13 family. In terms of assembly, component of the Integrator complex, composed of core subunits INTS1, INTS2, INTS3, INTS4, INTS5, INTS6, INTS7, INTS8, INTS9/RC74, INTS10, INTS11/CPSF3L, INTS12, INTS13, INTS14 and INTS15. The core complex associates with protein phosphatase 2A subunits PPP2CA and PPP2R1A, to form the Integrator-PP2A (INTAC) complex. INTS13 is part of the tail subcomplex, composed of INTS10, INTS13, INTS14 and INTS15.

It is found in the nucleus. The protein localises to the cytoplasm. Component of the integrator complex, a multiprotein complex that terminates RNA polymerase II (Pol II) transcription in the promoter-proximal region of genes. The integrator complex provides a quality checkpoint during transcription elongation by driving premature transcription termination of transcripts that are unfavorably configured for transcriptional elongation: the complex terminates transcription by (1) catalyzing dephosphorylation of the C-terminal domain (CTD) of Pol II subunit POLR2A/RPB1 and SUPT5H/SPT5, (2) degrading the exiting nascent RNA transcript via endonuclease activity and (3) promoting the release of Pol II from bound DNA. The integrator complex is also involved in terminating the synthesis of non-coding Pol II transcripts, such as enhancer RNAs (eRNAs), small nuclear RNAs (snRNAs), telomerase RNAs and long non-coding RNAs (lncRNAs). Within the integrator complex, INTS13 is part of the integrator tail module and acts as a platform for the recruitment of transcription factors at promoters. Plays a role in gastrulation and early embryogenesis. In Xenopus laevis (African clawed frog), this protein is Integrator complex subunit 13.